The chain runs to 374 residues: Gibberellin 3-beta-dioxygenase 1 (374 aa).

One can recognise a Fe2OG dioxygenase domain in the interval 206–307 (KACAALQLNS…RFSVAYLYGP (102 aa)). The Fe cation site is built by H231, D233, and H288. Residue R298 is part of the active site. Residue R298 participates in 2-oxoglutarate binding.

Belongs to the iron/ascorbate-dependent oxidoreductase family. GA3OX subfamily. L-ascorbate serves as cofactor. Requires Fe(2+) as cofactor. As to expression, expressed in radicles, roots, internodes, cotyledons, leaves and shoots. Barely detected in developing seeds. Not detected in flowers or young fruits.

The catalysed reaction is gibberellin A20 + 2-oxoglutarate + O2 = gibberellin A1 + succinate + CO2. The protein operates within plant hormone biosynthesis; gibberellin biosynthesis. Converts the inactive gibberellin (GA) precursors GA9 and GA20 in the bioactives gibberellins GA4 and GA1. Has a small activity on GA29, producing GA8. Unable to convert GA20 to GA5, GA5 to GA3 or GA12 to GA14. Involved in the production of bioactive GA for vegetative growth and development, but not for the 3-beta-hydroxylation of GA in developing seeds. This chain is Gibberellin 3-beta-dioxygenase 1 (LE), found in Pisum sativum (Garden pea).